A 319-amino-acid chain; its full sequence is Adenosine receptor A3 (319 aa).

Residues 1-15 (MEADNTTETDWLNIT) are Extracellular-facing. Asn-5 and Asn-13 each carry an N-linked (GlcNAc...) asparagine glycan. Residues 16–38 (YITMEAAIGLCAVVGNMLVIWVV) traverse the membrane as a helical segment. Residues 39–49 (KLNPTLRTTTV) lie on the Cytoplasmic side of the membrane. A helical membrane pass occupies residues 50–73 (YFIVSLALADIAVGVLVIPLAIAV). Residues 74-85 (SLQVKMHFYACL) are Extracellular-facing. A disulfide bridge connects residues Cys-84 and Cys-167. Residues 86–107 (FMSCVLLIFTHASIMSLLAIAV) form a helical membrane-spanning segment. At 108-127 (HRYLRVKLTVRYRTVTTQRR) the chain is on the cytoplasmic side. Residues 128 to 149 (IWLFLGLCWLVSFLVGLTPMFG) form a helical membrane-spanning segment. Residues 150-178 (WNRKATLASSQNSSTLLCHFRSVVSLDYM) lie on the Extracellular side of the membrane. Asn-161 carries N-linked (GlcNAc...) asparagine glycosylation. The chain crosses the membrane as a helical span at residues 179 to 199 (VFFSFITWILVPLVVMCIIYL). The Cytoplasmic portion of the chain corresponds to 200 to 232 (DIFYIIRNKLSQNLTGFRETRAFYGREFKTAKS). The chain crosses the membrane as a helical span at residues 233 to 256 (LFLVLFLFALCWLPLSIINFVSYF). Over 257–262 (DVKIPD) the chain is Extracellular. Residues 263–285 (VAMCLGILLSHANSMMNPIVYAC) form a helical membrane-spanning segment. Residues 286–319 (KIKKFKETYFLILRAVRLCQTSDSLDSNMEQTTE) lie on the Cytoplasmic side of the membrane. The S-palmitoyl cysteine moiety is linked to residue Cys-304.

The protein belongs to the G-protein coupled receptor 1 family. Post-translationally, phosphorylation on Thr-317 and Thr-318 may be crucial for rapid desensitization. Phosphorylation on Thr-317 may be necessary for phosphorylation on Thr-318 to occur.

The protein localises to the cell membrane. Its function is as follows. Receptor for adenosine. The activity of this receptor is mediated by G proteins which inhibits adenylyl cyclase. The chain is Adenosine receptor A3 (Adora3) from Mus musculus (Mouse).